Reading from the N-terminus, the 473-residue chain is H(+)/Cl(-) exchange transporter ClcA (473 aa).

The Cytoplasmic portion of the chain corresponds to 1–32 (MKTDTSTFLAQQIVRLRRRDQIRRLMQRDKTP). Residues 33-69 (LAILFMAAVVGTLTGLVGVAFEKTVSWVQNMRIGALV) traverse the membrane as a helical segment. Over 70–76 (QVADHAF) the chain is Periplasmic. The chain crosses the membrane as a helical span at residues 77-100 (LLWPLAFILSALLAMVGYFLVRKF). The short motif at 106 to 110 (GSGIP) is the Selectivity filter part_1 element. S107 is a chloride binding site. Residues 109–116 (IPEIEGAL) constitute an intramembrane region (helical). Over 117-123 (EELRPVR) the chain is Cytoplasmic. A run of 2 helical transmembrane segments spans residues 124 to 141 (WWRV…TLGA) and 148 to 166 (EGPT…LDVF). The short motif at 146 to 150 (GREGP) is the Selectivity filter part_2 element. Over 167–176 (RMRSAEARHT) the chain is Cytoplasmic. 2 consecutive intramembrane regions (helical) follow at residues 177 to 189 (LLAT…LSAA) and 193 to 201 (PLAGILFII). Over 202–214 (EEMRPQFRYNLIS) the chain is Cytoplasmic. The helical transmembrane segment at 215 to 232 (IKAVFTGVIMSSIVFRIF) threads the bilayer. Residues 233–252 (NGEAPIIEVGKLSDAPVNTL) are Periplasmic-facing. Residues 253–281 (WLYLILGIIFGCVGPVFNSLVLRTQDMFQ) form a helical membrane-spanning segment. The Cytoplasmic portion of the chain corresponds to 282-287 (RFHGGE). A helical transmembrane segment spans residues 288–309 (IKKWVLMGGAIGGLCGILGLIE). Residues 310-329 (PAAAGGGFNLIPIAAAGNFS) lie on the Periplasmic side of the membrane. 2 consecutive transmembrane segments (helical) span residues 330-349 (VGLL…LCFS) and 355-376 (GIFA…MAAA). The Selectivity filter part_3 motif lies at 355 to 359 (GIFAP). 2 residues coordinate chloride: I356 and F357. The Periplasmic portion of the chain corresponds to 377–386 (VLFPQYHLEA). An intramembrane region (helical) is located at residues 387-401 (GTFAIAGMGALMAAS). The note=Loop between two helices intramembrane region spans 402-404 (VRA). An intramembrane region (helical) is located at residues 405 to 416 (PLTGIVLVLEMT). An intramembrane region (note=Loop between two helices) is located at residues 417-421 (DNYQL). The chain crosses the membrane as a helical span at residues 422–438 (ILPMIITCLGATLLAQF). The Cytoplasmic portion of the chain corresponds to 439–473 (LGGKPLYSTILARTLAKQDAEQAAKNQNAPAGENT). Y445 lines the chloride pocket.

It belongs to the chloride channel (TC 2.A.49) family. ClcA subfamily. As to quaternary structure, homodimer.

It is found in the cell inner membrane. The catalysed reaction is 2 chloride(in) + H(+)(out) = 2 chloride(out) + H(+)(in). Proton-coupled chloride transporter. Functions as antiport system and exchanges two chloride ions for 1 proton. Probably acts as an electrical shunt for an outwardly-directed proton pump that is linked to amino acid decarboxylation, as part of the extreme acid resistance (XAR) response. The polypeptide is H(+)/Cl(-) exchange transporter ClcA (Salmonella typhi).